A 138-amino-acid polypeptide reads, in one-letter code: Large ribosomal subunit protein uL16 (138 aa).

Belongs to the universal ribosomal protein uL16 family. In terms of assembly, part of the 50S ribosomal subunit.

Functionally, binds 23S rRNA and is also seen to make contacts with the A and possibly P site tRNAs. The sequence is that of Large ribosomal subunit protein uL16 from Rubrobacter xylanophilus (strain DSM 9941 / JCM 11954 / NBRC 16129 / PRD-1).